A 483-amino-acid chain; its full sequence is Coagulation factor X isoform 1 (483 aa).

A signal peptide spans 1–20 (MAPQLLLCLILTFLWSLPEA). Residues 21 to 40 (ESNVFLKSKVANRFLQRTKR) constitute a propeptide that is removed on maturation. The Gla domain maps to 41–86 (ANSLFEEFKSGNIERECIEERCSKEEAREAFEDDEKTETFWNVYVD). 11 positions are modified to 4-carboxyglutamate: E46, E47, E54, E56, E59, E60, E65, E66, E69, E72, and E75. C57 and C62 are disulfide-bonded. The 37-residue stretch at 86-122 (DGDQCSSNPCHYGGTCKDGIGSYTCTCLSGYEGKNCE) folds into the EGF-like 1; calcium-binding domain. Intrachain disulfides connect C90/C101, C95/C110, C112/C121, C129/C140, C136/C149, C151/C164, C172/C345, C245/C250, C265/C281, C393/C407, and C418/C446. A glycan (O-linked (Hex...) serine) is linked at S92. D103 is subject to (3R)-3-hydroxyaspartate. Positions 125 to 165 (LYKSCRVDNGDCWHFCKPVQNGIQCSCAESYLLGEDGHSCV) constitute an EGF-like 2 domain. Residues 183–238 (EANLPDFQTDFSDDYDEIDENNFVETPTNFSGLVLTVQSQNATLLKKSDNPSPDIR) constitute a propeptide, activation peptide. Residues 239 to 470 (VVNGTDCKLG…FILWIKRIIR (232 aa)) enclose the Peptidase S1 domain. H280 serves as the catalytic Charge relay system. N283 is a glycosylation site (N-linked (GlcNAc...) asparagine). D325 acts as the Charge relay system in catalysis. S422 (charge relay system) is an active-site residue.

Belongs to the peptidase S1 family. As to quaternary structure, heterodimer of a light chain and a heavy chain; disulfide-linked. Post-translationally, gamma-carboxyglutamate residues are formed by vitamin K dependent carboxylation. These residues are essential for the binding of calcium. The activation peptide is cleaved by factor IXa (in the intrinsic pathway), or by factor VIIa (in the extrinsic pathway). In terms of processing, the iron and 2-oxoglutarate dependent 3-hydroxylation of aspartate and asparagine is (R) stereospecific within EGF domains. Plasma; synthesized in the liver.

The protein localises to the secreted. The enzyme catalyses Selective cleavage of Arg-|-Thr and then Arg-|-Ile bonds in prothrombin to form thrombin.. Its function is as follows. Factor Xa is a vitamin K-dependent glycoprotein that converts prothrombin to thrombin in the presence of factor Va, calcium and phospholipid during blood clotting. The protein is Coagulation factor X isoform 1 (F10) of Pseudonaja textilis (Eastern brown snake).